A 498-amino-acid polypeptide reads, in one-letter code: Transcription factor bHLH78 (498 aa).

Disordered regions lie at residues 1–24 and 207–297; these read MDNE…FEHQ and LVSP…PPKD. Residues 233-246 show a composition bias toward polar residues; the sequence is NPISTASPSPSFSK. Residues 259 to 270 are compositionally biased toward basic and acidic residues; the sequence is SSEEKGGKRRRE. The segment covering 271 to 281 has biased composition (acidic residues); it reads EEDDEEEEGEG. The 51-residue stretch at 307 to 357 folds into the bHLH domain; it reads QATDSHSLAERVRREKIGERMKLLQDLVPGCNKVTGKALMLDEIINYVQSL.

In terms of assembly, homodimer. Binds reversibly to CRY2 after blue light illumination. As to expression, expressed constitutively in roots, leaves, stems, and flowers.

Its subcellular location is the nucleus. Functionally, transcription factor that binds DNA to G box 5'-CACGTG-3' and to E-box 5'-CANNTG-3'. Binds to chromatin DNA of the FT gene and promotes its expression, and thus triggers flowering in response to blue light. This Arabidopsis thaliana (Mouse-ear cress) protein is Transcription factor bHLH78 (BHLH78).